The sequence spans 861 residues: Probable beta-glucosidase A (861 aa).

A signal peptide spans 1–19; that stretch reads MKLSILEAAALTAASVVSA. 3 N-linked (GlcNAc...) asparagine glycosylation sites follow: Asn-62, Asn-212, and Asn-253. The active site involves Asp-281. Asn-316, Asn-323, Asn-355, Asn-524, Asn-543, Asn-565, Asn-669, and Asn-713 each carry an N-linked (GlcNAc...) asparagine glycan. Residues 735-754 are disordered; that stretch reads PEGATDGSPQPRLPASGGPG.

The protein belongs to the glycosyl hydrolase 3 family.

The protein resides in the secreted. The catalysed reaction is Hydrolysis of terminal, non-reducing beta-D-glucosyl residues with release of beta-D-glucose.. The protein operates within glycan metabolism; cellulose degradation. Its function is as follows. Beta-glucosidases are one of a number of cellulolytic enzymes involved in the degradation of cellulosic biomass. Catalyzes the last step releasing glucose from the inhibitory cellobiose. The protein is Probable beta-glucosidase A (bglA) of Aspergillus terreus (strain NIH 2624 / FGSC A1156).